The following is a 508-amino-acid chain: Protein disulfide-isomerase (508 aa).

The first 17 residues, 1-17 (MLRRALLCLAVAALVRA), serve as a signal peptide directing secretion. In terms of domain architecture, Thioredoxin 1 spans 18 to 134 (DAPEEEDHVL…IVNWLKKRTG (117 aa)). Residues C53 and C56 each act as nucleophile in the active site. C53 and C56 form a disulfide bridge. An N6-acetyllysine modification is found at K200. N6-succinyllysine is present on residues K222 and K271. A Phosphoserine modification is found at S331. The 127-residue stretch at 349 to 475 (GKIKPHLMSQ…FKKFLESGGQ (127 aa)) folds into the Thioredoxin 2 domain. A Phosphoserine; by FAM20C modification is found at S357. Catalysis depends on nucleophile residues C397 and C400. C397 and C400 are disulfide-bonded. S427 carries the post-translational modification Phosphoserine. The tract at residues 471–508 (ESGGQDGAGDDDDLEDLEEAEEPDMEEDDDQKAVKDEL) is disordered. The span at 478–500 (AGDDDDLEDLEEAEEPDMEEDDD) shows a compositional bias: acidic residues. Positions 505-508 (KDEL) match the Prevents secretion from ER motif.

It belongs to the protein disulfide isomerase family. As to quaternary structure, heterodimer; heterodimerizes with the protein microsomal triglyceride transfer MTTP. Homodimer. Monomers and homotetramers may also occur. Interacts with P4HA2, forming a heterotetramer consisting of 2 alpha subunits (P4HA2) and 2 beta (P4HB), where P4HB plays the role of a structural subunit; this tetramer catalyzes the formation of 4-hydroxyproline in collagen. Also constitutes the structural subunit of the microsomal triacylglycerol transfer protein MTTP in mammalian cells. Stabilizes both enzymes and retain them in the ER without contributing to the catalytic activity. Binds UBQLN1. Interacts with ERO1B. Binds to CD4, and upon HIV-1 binding to the cell membrane, is part of a P4HB/PDI-CD4-CXCR4-gp120 complex. Interacts with ILDR2. Interacts with ERN1/IRE1A (via N-terminus); the interaction is enhanced by phosphorylation of P4HB by FAM20C in response to endoplasmic reticulum stress and results in attenuation of ERN1 activity. Post-translationally, phosphorylation of Ser-357 by FAM20C is induced by endoplasmic reticulum stress and results in a functional switch from oxidoreductase to molecular chaperone. It also promotes interaction with ERN1.

Its subcellular location is the endoplasmic reticulum. The protein resides in the endoplasmic reticulum lumen. The protein localises to the melanosome. It is found in the cell membrane. It catalyses the reaction Catalyzes the rearrangement of -S-S- bonds in proteins.. Its function is as follows. This multifunctional protein catalyzes the formation, breakage and rearrangement of disulfide bonds. At the cell surface, seems to act as a reductase that cleaves disulfide bonds of proteins attached to the cell. May therefore cause structural modifications of exofacial proteins. Inside the cell, seems to form/rearrange disulfide bonds of nascent proteins. At high concentrations and following phosphorylation by FAM20C, functions as a chaperone that inhibits aggregation of misfolded proteins. At low concentrations, facilitates aggregation (anti-chaperone activity). May be involved with other chaperones in the structural modification of the TG precursor in hormone biogenesis. Also acts as a structural subunit of various enzymes such as prolyl 4-hydroxylase and microsomal triacylglycerol transfer protein MTTP. Receptor for LGALS9; the interaction retains P4HB at the cell surface of Th2 T helper cells, increasing disulfide reductase activity at the plasma membrane, altering the plasma membrane redox state and enhancing cell migration. The sequence is that of Protein disulfide-isomerase (P4HB) from Homo sapiens (Human).